A 354-amino-acid chain; its full sequence is Inactive ADP-ribosyltransferase ARH2 (354 aa).

The residue at position 27 (Ser-27) is a Phosphoserine.

The protein belongs to the ADP-ribosylglycohydrolase family.

It is found in the cytoplasm. Its subcellular location is the myofibril. The protein localises to the sarcomere. Its function is as follows. Required for myofibril assembly and outgrowth of the cardiac chambers in the developing heart. Appears to be catalytically inactive, showing no activity against O-acetyl-ADP-ribose. This is Inactive ADP-ribosyltransferase ARH2 (ADPRHL1) from Bos taurus (Bovine).